The primary structure comprises 156 residues: Transcription factor E (156 aa).

Residues methionine 1–glutamate 72 enclose the HTH TFE/IIEalpha-type domain.

The protein belongs to the TFE family. In terms of assembly, monomer. Interaction with RNA polymerase subunits RpoF and RpoE is necessary for Tfe stimulatory transcription activity. Able to interact with Tbp and RNA polymerase in the absence of DNA promoter. Interacts both with the preinitiation and elongation complexes.

In terms of biological role, transcription factor that plays a role in the activation of archaeal genes transcribed by RNA polymerase. Facilitates transcription initiation by enhancing TATA-box recognition by TATA-box-binding protein (Tbp), and transcription factor B (Tfb) and RNA polymerase recruitment. Not absolutely required for transcription in vitro, but particularly important in cases where Tbp or Tfb function is not optimal. It dynamically alters the nucleic acid-binding properties of RNA polymerases by stabilizing the initiation complex and destabilizing elongation complexes. Seems to translocate with the RNA polymerase following initiation and acts by binding to the non template strand of the transcription bubble in elongation complexes. The protein is Transcription factor E of Staphylothermus marinus (strain ATCC 43588 / DSM 3639 / JCM 9404 / F1).